A 185-amino-acid polypeptide reads, in one-letter code: Guanosine deaminase (185 aa).

The 115-residue stretch at Asp28 to Phe142 folds into the CMP/dCMP-type deaminase domain. His80 contributes to the Zn(2+) binding site. Glu82 acts as the Proton donor in catalysis. Residues Cys110 and Cys113 each contribute to the Zn(2+) site.

It belongs to the cytidine and deoxycytidylate deaminase family. As to expression, expressed in roots, leaves, flowers and siliques.

It localises to the cytoplasm. Its subcellular location is the nucleus. The enzyme catalyses guanosine + H2O + H(+) = xanthosine + NH4(+). Functionally, catalyzes the hydrolytic deamination of guanosine, producing xanthosine and ammonia. Deaminates exclusively guanosine and 2'-deoxyguanosine but no other aminated purines, pyrimidines, or pterines. Deamination of guanosine by GSDA is the only source of xanthosine production in Arabidopsis. This is Guanosine deaminase from Arabidopsis thaliana (Mouse-ear cress).